The chain runs to 378 residues: Transcription initiation factor IIA subunit 1 (378 aa).

Ala-2 carries the post-translational modification N-acetylalanine. Composition is skewed to low complexity over residues 69 to 79 (QVQQQHQPQQQ), 89 to 106 (QQAQ…TQQV), and 247 to 281 (PAQA…TGDT). Disordered stretches follow at residues 69-108 (QVQQ…QVLI) and 247-331 (PAQA…QELF). Phosphoserine; by TAF1 is present on residues Ser-282, Ser-283, Ser-318, and Ser-323. The segment covering 282–331 (SSEEDEDEEEDYDDDEEEDKEKDGAEDGQVEEEPLNSEDDVSDEEGQELF) has biased composition (acidic residues). 2 residues coordinate DNA: His-345 and Arg-346.

Belongs to the TFIIA subunit 1 family. As to quaternary structure, TFIIA is a heterodimer of the large unprocessed subunit 1 and a small subunit gamma. It was originally believed to be a heterotrimer of an alpha (p35), a beta (p19) and a gamma subunit (p12). TFIIA forms a complex with TBP. Part of TBP-based Pol II pre-initiation complex (PIC), in which Pol II core assembles with general transcription factors and other specific initiation factors including GTF2E1, GTF2E2, GTF2F1, GTF2F2, TCEA1, ERCC2, ERCC3, GTF2H2, GTF2H3, GTF2H4, GTF2H5, GTF2A1, GTF2A2, GTF2B and TBP; this large multi-subunit PIC complex mediates DNA unwinding and targets Pol II core to the transcription start site where the first phosphodiester bond forms. In terms of processing, the alpha and beta subunits are postranslationally produced from the precursor form by TASP1. The cleavage promotes proteasomal degradation. Expressed in pachytene spermatocytes and spermatids.

The protein localises to the nucleus. TFIIA is a component of the transcription machinery of RNA polymerase II and plays an important role in transcriptional activation. TFIIA in a complex with TBP mediates transcriptional activity. The polypeptide is Transcription initiation factor IIA subunit 1 (Gtf2a1) (Mus musculus (Mouse)).